A 252-amino-acid polypeptide reads, in one-letter code: Neurexophilin-3 (252 aa).

A signal peptide spans 1–22 (MQLTRCCFVFLVQGSLYLVICG). The segment at 23–75 (QEDGPPGSEDPEHDDHEGQPRPRVPRKRGHISPKSRPLANSTLLGLLAPPGEV) is II. Residues 27–59 (PPGSEDPEHDDHEGQPRPRVPRKRGHISPKSRP) are disordered. Positions 45 to 55 (RVPRKRGHISP) are enriched in basic residues. Asn-62, Asn-127, Asn-137, and Asn-143 each carry an N-linked (GlcNAc...) asparagine glycan. An III region spans residues 76–157 (WGILGQPPNR…LVPPSKAVEF (82 aa)). An IV (linker domain) region spans residues 158–166 (HQEQQIFIE). The interval 167-252 (AKASKIFNCR…HSDTPYYPSG (86 aa)) is v (Cys-rich).

This sequence belongs to the neurexophilin family. May be proteolytically processed at the boundary between the N-terminal non-conserved and the central conserved domain in neuron-like cells. As to expression, brain. Detected in several other tissues.

Its subcellular location is the secreted. Functionally, may be signaling molecules that resemble neuropeptides. Ligand for alpha-neurexins. The chain is Neurexophilin-3 (Nxph3) from Rattus norvegicus (Rat).